A 39-amino-acid polypeptide reads, in one-letter code: Cytochrome b6-f complex subunit 5 (39 aa).

Residues 5–25 (LLCGIVLGLVPITLLGLFVSA) traverse the membrane as a helical segment.

Belongs to the PetG family. In terms of assembly, the 4 large subunits of the cytochrome b6-f complex are cytochrome b6, subunit IV (17 kDa polypeptide, PetD), cytochrome f and the Rieske protein, while the 4 small subunits are PetG, PetL, PetM and PetN. The complex functions as a dimer.

The protein resides in the cellular thylakoid membrane. Component of the cytochrome b6-f complex, which mediates electron transfer between photosystem II (PSII) and photosystem I (PSI), cyclic electron flow around PSI, and state transitions. PetG is required for either the stability or assembly of the cytochrome b6-f complex. This is Cytochrome b6-f complex subunit 5 from Prochlorococcus marinus (strain MIT 9515).